A 416-amino-acid polypeptide reads, in one-letter code: Serine/threonine-protein kinase 26 (416 aa).

Alanine 2 carries the N-acetylalanine modification. At serine 4 the chain carries Phosphoserine. One can recognise a Protein kinase domain in the interval 24-274 (FTKLERIGKG…AKELLKHKFI (251 aa)). ATP contacts are provided by residues 30–38 (IGKGSFGEV) and lysine 53. Aspartate 144 (proton acceptor) is an active-site residue. Position 178 is a phosphothreonine; by autocatalysis (threonine 178). The interval 297–340 (EGHSDDESDSEGSDSESTSRENNTHPEWSFTTVRKKPDPKKVQN) is disordered. Phosphoserine occurs at positions 300, 304, 306, 309, and 325. A phosphothreonine mark is found at threonine 327 and threonine 328.

Belongs to the protein kinase superfamily. STE Ser/Thr protein kinase family. STE20 subfamily. As to quaternary structure, homodimer. Interacts with PDCD10. Interacts with GOLGA2. Interacts with CTTNBP2NL. Interacts with RIPOR1 (via C-terminus); this interaction occurs in a PDCD10-dependent and Rho-independent manner. Interacts with PDCD10; this interaction is required for the association of STK26 with RIPOR1. Part of the core of STRIPAK complexes composed of PP2A catalytic and scaffolding subunits, the striatins (PP2A regulatory subunits), the striatin-associated proteins MOB4, STRIP1 and STRIP2, PDCD10 and members of the STE20 kinases, such as STK24 and STK26. It depends on Mg(2+) as a cofactor.

The protein resides in the cytoplasm. It localises to the golgi apparatus. The catalysed reaction is L-seryl-[protein] + ATP = O-phospho-L-seryl-[protein] + ADP + H(+). It carries out the reaction L-threonyl-[protein] + ATP = O-phospho-L-threonyl-[protein] + ADP + H(+). With respect to regulation, interaction with Golgi matrix protein GOLGA2 leads to autophosphorylation on Thr-178, possibly as a consequence of stabilization of dimer formation. May also be activated by C-terminal cleavage. Serine/threonine-protein kinase that acts as a mediator of cell growth. Modulates apoptosis. In association with STK24 negatively regulates Golgi reorientation in polarized cell migration upon RHO activation. Phosphorylates ATG4B at 'Ser-383', thereby increasing autophagic flux. Part of the striatin-interacting phosphatase and kinase (STRIPAK) complexes. STRIPAK complexes have critical roles in protein (de)phosphorylation and are regulators of multiple signaling pathways including Hippo, MAPK, nuclear receptor and cytoskeleton remodeling. Different types of STRIPAK complexes are involved in a variety of biological processes such as cell growth, differentiation, apoptosis, metabolism and immune regulation. This chain is Serine/threonine-protein kinase 26, found in Homo sapiens (Human).